Here is a 455-residue protein sequence, read N- to C-terminus: Chromosomal replication initiator protein DnaA (455 aa).

Residues 1–75 form a domain I, interacts with DnaA modulators region; sequence MDTNNNIEKE…EILSQNKVGM (75 aa). Residues 75-106 form a domain II region; the sequence is MHLAHSVDVRIEVAPKIQINAQANINYKAIKT. Residues 107–321 form a domain III, AAA+ region region; that stretch reads SVKDSYTFEN…GAIIKISVNA (215 aa). The ATP site is built by glycine 151, glycine 153, lysine 154, and threonine 155. The segment at 322–455 is domain IV, binds dsDNA; sequence NLMNAPIDLN…DKKTAFNSSE (134 aa).

Belongs to the DnaA family. In terms of assembly, oligomerizes as a right-handed, spiral filament on DNA at oriC.

Its subcellular location is the cytoplasm. In terms of biological role, plays an essential role in the initiation and regulation of chromosomal replication. ATP-DnaA binds to the origin of replication (oriC) to initiate formation of the DNA replication initiation complex once per cell cycle. Binds the DnaA box (a 9 base pair repeat at the origin) and separates the double-stranded (ds)DNA. Forms a right-handed helical filament on oriC DNA; dsDNA binds to the exterior of the filament while single-stranded (ss)DNA is stabiized in the filament's interior. The ATP-DnaA-oriC complex binds and stabilizes one strand of the AT-rich DNA unwinding element (DUE), permitting loading of DNA polymerase. After initiation quickly degrades to an ADP-DnaA complex that is not apt for DNA replication. Binds acidic phospholipids. This chain is Chromosomal replication initiator protein DnaA, found in Helicobacter pylori (strain P12).